Here is a 150-residue protein sequence, read N- to C-terminus: Large ribosomal subunit protein bL9 (150 aa).

It belongs to the bacterial ribosomal protein bL9 family.

Its function is as follows. Binds to the 23S rRNA. This Cupriavidus metallidurans (strain ATCC 43123 / DSM 2839 / NBRC 102507 / CH34) (Ralstonia metallidurans) protein is Large ribosomal subunit protein bL9.